The chain runs to 223 residues: SCMKAAPMKEVSIRGQGSLAYPGLRTQGNLETLGGPNDATRGLTSLADTFEHVIEELLDEQQVIQPSKENKDADLYSTRVMLSSQVPLEPPLLFLLEEYKNYLDAANMSMRVRRHSDPARRGELSVCDSTSEWVTAAEKKTAVDMSGATVTVLEKVPVPKGQLKQYFYETKCSSKGYAKEGCRGIDKRYWNSQCRTTQSFVRALTMDNKKRVGWRFIRIDTSC.

Residues 1–5 (SCMKA) form the signal peptide. The propeptide occupies 6–114 (APMKEVSIRG…AANMSMRVRR (109 aa)). A glycan (N-linked (GlcNAc...) asparagine) is linked at Asn107. 2 cysteine pairs are disulfide-bonded: Cys127–Cys194 and Cys172–Cys223.

It belongs to the NGF-beta family.

It localises to the secreted. Its function is as follows. Promotes the survival of neuronal populations that are all located either in the central nervous system or directly connected to it. The polypeptide is Neurotrophic factor BDNF precursor form (BDNF) (Boa constrictor (Boa)).